Consider the following 332-residue polypeptide: Phosphoribulokinase (332 aa).

This sequence belongs to the phosphoribulokinase family.

It catalyses the reaction D-ribulose 5-phosphate + ATP = D-ribulose 1,5-bisphosphate + ADP + H(+). Its pathway is carbohydrate biosynthesis; Calvin cycle. The protein is Phosphoribulokinase (prk) of Synechocystis sp. (strain ATCC 27184 / PCC 6803 / Kazusa).